Consider the following 251-residue polypeptide: Probable transcriptional regulatory protein Francci3_1368 (251 aa).

This sequence belongs to the TACO1 family.

Its subcellular location is the cytoplasm. The polypeptide is Probable transcriptional regulatory protein Francci3_1368 (Frankia casuarinae (strain DSM 45818 / CECT 9043 / HFP020203 / CcI3)).